A 296-amino-acid polypeptide reads, in one-letter code: Ribose import binding protein RbsB (296 aa).

Positions 1–25 are cleaved as a signal peptide; sequence MNMKKLATLVSAVALSATVSANAMA.

This sequence belongs to the bacterial solute-binding protein 2 family. The complex is composed of an ATP-binding protein (RbsA), two transmembrane proteins (RbsC) and a solute-binding protein (RbsB).

It localises to the periplasm. Part of the ABC transporter complex RbsABC involved in ribose import. Binds ribose. Also serves as the primary chemoreceptor for chemotaxis. The polypeptide is Ribose import binding protein RbsB (Escherichia coli (strain K12)).